The primary structure comprises 721 residues: Catalase-peroxidase 1 (721 aa).

The tryptophyl-tyrosyl-methioninium (Trp-Tyr) (with M-252) cross-link spans 98-226 (WHAAGTYRIA…LAAVMMGLIY (129 aa)). His-99 serves as the catalytic Proton acceptor. The segment at residues 226 to 252 (YVNPEGVDGQPDPLKTAHDVRVTFARM) is a cross-link (tryptophyl-tyrosyl-methioninium (Tyr-Met) (with W-98)). Residue His-267 coordinates heme b.

It belongs to the peroxidase family. Peroxidase/catalase subfamily. As to quaternary structure, homodimer or homotetramer. Heme b is required as a cofactor. Formation of the three residue Trp-Tyr-Met cross-link is important for the catalase, but not the peroxidase activity of the enzyme.

It catalyses the reaction H2O2 + AH2 = A + 2 H2O. The enzyme catalyses 2 H2O2 = O2 + 2 H2O. Its function is as follows. Bifunctional enzyme with both catalase and broad-spectrum peroxidase activity. The chain is Catalase-peroxidase 1 from Vibrio parahaemolyticus serotype O3:K6 (strain RIMD 2210633).